We begin with the raw amino-acid sequence, 225 residues long: Probable 3-keto-L-gulonate-6-phosphate decarboxylase (225 aa).

Residue Asp-11 participates in substrate binding. Positions 33 and 62 each coordinate Mg(2+). Arg-202 is a substrate binding site.

Belongs to the HPS/KGPDC family. KGPDC subfamily. Homodimer. It depends on Mg(2+) as a cofactor.

The enzyme catalyses 3-dehydro-L-gulonate 6-phosphate + H(+) = L-xylulose 5-phosphate + CO2. In terms of biological role, catalyzes the decarboxylation of 3-keto-L-gulonate-6-P into L-xylulose-5-P. The sequence is that of Probable 3-keto-L-gulonate-6-phosphate decarboxylase (sgbH) from Haemophilus influenzae (strain ATCC 51907 / DSM 11121 / KW20 / Rd).